A 674-amino-acid polypeptide reads, in one-letter code: DNA ligase (674 aa).

NAD(+)-binding positions include 34–38, 82–83, and Glu-107; these read DADFD and SL. The N6-AMP-lysine intermediate role is filled by Lys-109. Arg-130, Glu-170, Lys-286, and Lys-310 together coordinate NAD(+). The Zn(2+) site is built by Cys-404, Cys-407, Cys-423, and Cys-429. One can recognise a BRCT domain in the interval 593–674; sequence KPAQTLEGIT…FTRLLETGEA (82 aa).

The protein belongs to the NAD-dependent DNA ligase family. LigA subfamily. The cofactor is Mg(2+). Requires Mn(2+) as cofactor.

It catalyses the reaction NAD(+) + (deoxyribonucleotide)n-3'-hydroxyl + 5'-phospho-(deoxyribonucleotide)m = (deoxyribonucleotide)n+m + AMP + beta-nicotinamide D-nucleotide.. Functionally, DNA ligase that catalyzes the formation of phosphodiester linkages between 5'-phosphoryl and 3'-hydroxyl groups in double-stranded DNA using NAD as a coenzyme and as the energy source for the reaction. It is essential for DNA replication and repair of damaged DNA. The sequence is that of DNA ligase from Corynebacterium aurimucosum (strain ATCC 700975 / DSM 44827 / CIP 107346 / CN-1) (Corynebacterium nigricans).